A 76-amino-acid chain; its full sequence is Conotoxin VnMEKL-021 (76 aa).

The first 19 residues, 1 to 19, serve as a signal peptide directing secretion; it reads MQKLTILLLVAAVLMSTQA. Residues 20–37 constitute a propeptide that is removed on maturation; it reads LIKGGGEKRPKEKIKFLS. Disulfide bonds link Cys-51–Cys-65, Cys-58–Cys-69, and Cys-64–Cys-73.

Belongs to the conotoxin O2 superfamily. In terms of tissue distribution, expressed by the venom duct.

The protein localises to the secreted. The chain is Conotoxin VnMEKL-021 from Conus ventricosus (Mediterranean cone).